Reading from the N-terminus, the 267-residue chain is Putative carbamate hydrolase RutD (267 aa).

An AB hydrolase-1 domain is found at 14–115 (PTLVLSAGLG…EKLVVVNGWP (102 aa)).

The protein belongs to the AB hydrolase superfamily. Hydrolase RutD family.

It catalyses the reaction carbamate + 2 H(+) = NH4(+) + CO2. Its function is as follows. Involved in pyrimidine catabolism. May facilitate the hydrolysis of carbamate, a reaction that can also occur spontaneously. The sequence is that of Putative carbamate hydrolase RutD from Serratia proteamaculans (strain 568).